The primary structure comprises 172 residues: Endoribonuclease YbeY (172 aa).

3 residues coordinate Zn(2+): histidine 137, histidine 141, and histidine 147.

This sequence belongs to the endoribonuclease YbeY family. It depends on Zn(2+) as a cofactor.

The protein localises to the cytoplasm. In terms of biological role, single strand-specific metallo-endoribonuclease involved in late-stage 70S ribosome quality control and in maturation of the 3' terminus of the 16S rRNA. This is Endoribonuclease YbeY from Dehalococcoides mccartyi (strain ATCC BAA-2266 / KCTC 15142 / 195) (Dehalococcoides ethenogenes (strain 195)).